Reading from the N-terminus, the 637-residue chain is Chaperone protein HtpG (637 aa).

The a; substrate-binding stretch occupies residues 1-345 (MSQQETHGFQ…SNDLPLNVSR (345 aa)). A b region spans residues 346–562 (EILQDNHITK…EGEMSTQMIK (217 aa)). The segment at 563–637 (LMQAAGQPVP…MNQMLLANMK (75 aa)) is c.

The protein belongs to the heat shock protein 90 family. Homodimer.

The protein localises to the cytoplasm. Its function is as follows. Molecular chaperone. Has ATPase activity. This is Chaperone protein HtpG from Shewanella putrefaciens (strain CN-32 / ATCC BAA-453).